A 462-amino-acid polypeptide reads, in one-letter code: tRNA modification GTPase MnmE (462 aa).

(6S)-5-formyl-5,6,7,8-tetrahydrofolate is bound by residues Arg-22, Glu-87, and Arg-126. Positions 220 to 382 (GLKVAIVGRP…LARKVQEIVL (163 aa)) constitute a TrmE-type G domain. A K(+)-binding site is contributed by Asn-230. GTP contacts are provided by residues 230-235 (NVGKSS), 249-255 (SNIPGTT), and 274-277 (DTAG). Mg(2+) is bound at residue Ser-234. K(+)-binding residues include Ser-249, Ile-251, and Thr-254. Thr-255 provides a ligand contact to Mg(2+). Lys-462 serves as a coordination point for (6S)-5-formyl-5,6,7,8-tetrahydrofolate.

The protein belongs to the TRAFAC class TrmE-Era-EngA-EngB-Septin-like GTPase superfamily. TrmE GTPase family. Homodimer. Heterotetramer of two MnmE and two MnmG subunits. K(+) is required as a cofactor.

It localises to the cytoplasm. Functionally, exhibits a very high intrinsic GTPase hydrolysis rate. Involved in the addition of a carboxymethylaminomethyl (cmnm) group at the wobble position (U34) of certain tRNAs, forming tRNA-cmnm(5)s(2)U34. The sequence is that of tRNA modification GTPase MnmE from Moorella thermoacetica (strain ATCC 39073 / JCM 9320).